The chain runs to 853 residues: DNA mismatch repair protein MutS (853 aa).

614 to 621 (GPNMGGKS) is a binding site for ATP.

The protein belongs to the DNA mismatch repair MutS family.

In terms of biological role, this protein is involved in the repair of mismatches in DNA. It is possible that it carries out the mismatch recognition step. This protein has a weak ATPase activity. In Shigella dysenteriae serotype 1 (strain Sd197), this protein is DNA mismatch repair protein MutS.